Consider the following 415-residue polypeptide: Imidazolonepropionase (415 aa).

Fe(3+)-binding residues include histidine 76 and histidine 78. Residues histidine 76 and histidine 78 each coordinate Zn(2+). Positions 85, 148, and 181 each coordinate 4-imidazolone-5-propanoate. Position 148 (tyrosine 148) interacts with N-formimidoyl-L-glutamate. Histidine 246 contributes to the Fe(3+) binding site. Position 246 (histidine 246) interacts with Zn(2+). Position 249 (glutamate 249) interacts with 4-imidazolone-5-propanoate. Aspartate 320 provides a ligand contact to Fe(3+). Aspartate 320 lines the Zn(2+) pocket. Residues asparagine 322 and glycine 324 each coordinate N-formimidoyl-L-glutamate. Residue threonine 325 coordinates 4-imidazolone-5-propanoate.

It belongs to the metallo-dependent hydrolases superfamily. HutI family. Zn(2+) is required as a cofactor. It depends on Fe(3+) as a cofactor.

It localises to the cytoplasm. The enzyme catalyses 4-imidazolone-5-propanoate + H2O = N-formimidoyl-L-glutamate. Its pathway is amino-acid degradation; L-histidine degradation into L-glutamate; N-formimidoyl-L-glutamate from L-histidine: step 3/3. Its function is as follows. Catalyzes the hydrolytic cleavage of the carbon-nitrogen bond in imidazolone-5-propanoate to yield N-formimidoyl-L-glutamate. It is the third step in the universal histidine degradation pathway. In Caldanaerobacter subterraneus subsp. tengcongensis (strain DSM 15242 / JCM 11007 / NBRC 100824 / MB4) (Thermoanaerobacter tengcongensis), this protein is Imidazolonepropionase.